The chain runs to 369 residues: Serpentine receptor class epsilon-45 (369 aa).

8 helical membrane-spanning segments follow: residues 1 to 21 (MIFLIGNSTSNYTVCFPIFIL), 39 to 59 (FVLTFVSFYYVIKCCYVAIHI), 67 to 87 (TVLLIILMIQWFEGLLSNILI), 127 to 147 (FFLGGFLKWHYILSMITTLLV), 169 to 191 (GLFFMLVVGQTSTNLVMGYLFFF), 195 to 217 (HFAVGFSIILSTNIIAMGIFTYV), 258 to 278 (VIHAGLFLILTACFVNLFMYL), and 291 to 311 (IFESAINLNPVVIVPTLLGSV).

This sequence belongs to the nematode receptor-like protein sre family.

The protein localises to the membrane. In Caenorhabditis elegans, this protein is Serpentine receptor class epsilon-45 (sre-45).